The chain runs to 158 residues: Putative ribonucleoside-diphosphate reductase small chain B (158 aa).

The protein belongs to the ribonucleoside diphosphate reductase small chain family.

This Arabidopsis thaliana (Mouse-ear cress) protein is Putative ribonucleoside-diphosphate reductase small chain B (RNR2B).